We begin with the raw amino-acid sequence, 152 residues long: Methylglyoxal synthase (152 aa).

The region spanning 6 to 152 (RTIPAQKHIA…YQRYLQDRLK (147 aa)) is the MGS-like domain. Substrate-binding positions include histidine 19, lysine 23, 45–48 (TGTT), and 65–66 (SG). Aspartate 71 (proton donor/acceptor) is an active-site residue. Histidine 98 provides a ligand contact to substrate.

It belongs to the methylglyoxal synthase family.

The enzyme catalyses dihydroxyacetone phosphate = methylglyoxal + phosphate. Its function is as follows. Catalyzes the formation of methylglyoxal from dihydroxyacetone phosphate. The polypeptide is Methylglyoxal synthase (Pectobacterium atrosepticum (strain SCRI 1043 / ATCC BAA-672) (Erwinia carotovora subsp. atroseptica)).